The primary structure comprises 498 residues: Flagellin (498 aa).

It belongs to the bacterial flagellin family.

It localises to the secreted. Its subcellular location is the bacterial flagellum. In terms of biological role, flagellin is the subunit protein which polymerizes to form the filaments of bacterial flagella. The protein is Flagellin (fliC) of Escherichia coli (strain K12).